We begin with the raw amino-acid sequence, 212 residues long: MNDVHDCLVWVNDPYFHPISKRPIKYKGPTWRHYDKKCDLLGITGPKATKSPSRRTTRSPSPSRRTTRSSPSRRTTRSSPSRRTTRSPSPSGRRKQGGPAVYCGNNALDEGLLDGSKVVGTRYQCLQKGVAVGLNNPVLHHSPNYQPIVDAKIYCGTGSKLPASKLRFGTPTECMGKGYQIGQNKRFQQSGLQQGPYIWEEDGWYKIIVPKN.

Positions 42-101 (GITGPKATKSPSRRTTRSPSPSRRTTRSSPSRRTTRSSPSRRTTRSPSPSGRRKQGGPAV) are disordered. The segment covering 58–91 (RSPSPSRRTTRSSPSRRTTRSSPSRRTTRSPSPS) has biased composition (low complexity).

The protein belongs to the IIV-6 378R family.

This is an uncharacterized protein from Invertebrate iridescent virus 3 (IIV-3).